The primary structure comprises 136 residues: MKSTISLLLVVICTVVLAAQQSQAKKGCQAYGHVCYGGHGKRSLSPGSGSGTGVGGGMGEAASGGQEPDYVRPNGLLPMMAPNEQVPLEGDFNDYPARQVLYKIMKSWFNRPRRPASRLGELDYPLANSAELNGVN.

Residues 1-24 form the signal peptide; it reads MKSTISLLLVVICTVVLAAQQSQA. A disulfide bridge connects residues Cys28 and Cys35. His39 is subject to Histidine amide. Positions 42–78 are disordered; the sequence is RSLSPGSGSGTGVGGGMGEAASGGQEPDYVRPNGLLP. A propeptide spanning residues 43 to 136 is cleaved from the precursor; it reads SLSPGSGSGT…ANSAELNGVN (94 aa). Gly residues predominate over residues 48-59; that stretch reads SGSGTGVGGGMG.

As to expression, expressed in endocrine cells of the larval midgut (at protein level). Also expressed in endocrine cells of the midgut of adult males and females (at protein level). In the midgut, expression occurs mainly in the anterior region (at protein level). In the larval central nervous system, expressed in about 40 neurons in the brain hemispheres and ventral nerve cord (at protein level). Highly expressed in larval and adult gut with low levels in larval and adult brain. Very little expression in the larval fat body. However, another study shows high levels of expression in the larval fat body as well as the larval gut with low levels in the larval central nervous system.

Its subcellular location is the secreted. In terms of biological role, ligand for the CCHamide-2 receptor CCHa2-R. In one study, shown to be an orexigenic peptide which induces appetite and stimulates food intake, leading to the release of insulin-like peptides which stimulate growth. In another study, shown to be a nutrient-sensitive peptide derived from peripheral tissues which controls growth by directly regulating the production and release of insulin-like peptides. This chain is Neuropeptide CCHamide-2, found in Drosophila melanogaster (Fruit fly).